The primary structure comprises 117 residues: Large ribosomal subunit protein bL19 (117 aa).

This sequence belongs to the bacterial ribosomal protein bL19 family.

In terms of biological role, this protein is located at the 30S-50S ribosomal subunit interface and may play a role in the structure and function of the aminoacyl-tRNA binding site. The sequence is that of Large ribosomal subunit protein bL19 from Thioalkalivibrio sulfidiphilus (strain HL-EbGR7).